The sequence spans 229 residues: Ras-related protein Rab-33B (229 aa).

Asn43, Val44, Gly45, Lys46, Thr47, Cys48, Thr62, and Thr65 together coordinate GTP. Position 47 (Thr47) interacts with Mg(2+). A Switch 1 motif is present at residues 56–68 (GRFPDRTEATIGV). Thr65 and Asp88 together coordinate Mg(2+). Positions 89 to 108 (TAGQERFRKSMVQHYYRNVH) match the Switch 2 motif. Positions 91, 148, 149, 151, 179, and 180 each coordinate GTP. S-geranylgeranyl cysteine attachment occurs at residues Cys227 and Cys229. A Cysteine methyl ester modification is found at Cys229.

It belongs to the small GTPase superfamily. Rab family. As to quaternary structure, interacts (GTP- and GDP-bound forms) with ATG16L1; the complex consists of a tetramer where two RAB33B molecules bind independently one molecule of the ATG16L1 homodimer; the interaction promotes ATG12-ATG5-ATG16L1 complex recruitment to phagophores. Interacts with ATG16L2; however interaction is approximately hundred times lower than for ATG16L1. Interacts with RIC1 (via C-terminus domain); the interaction is direct with a preference for RAB33B-GTP. Interacts with RGP1. Mg(2+) is required as a cofactor. Post-translationally, prenylated.

Its subcellular location is the golgi apparatus membrane. The protein localises to the golgi apparatus. It is found in the cis-Golgi network. It localises to the preautophagosomal structure membrane. The catalysed reaction is GTP + H2O = GDP + phosphate + H(+). Its activity is regulated as follows. Regulated by guanine nucleotide exchange factors (GEFs) which promote the exchange of bound GDP for free GTP. Regulated by GTPase activating proteins (GAPs) such as SGSM2 which increase the GTP hydrolysis activity. Inhibited by GDP dissociation inhibitors (GDIs). In terms of biological role, the small GTPases Rab are key regulators of intracellular membrane trafficking, from the formation of transport vesicles to their fusion with membranes. Rabs cycle between an inactive GDP-bound form and an active GTP-bound form that is able to recruit to membranes different sets of downstream effectors directly responsible for vesicle formation, movement, tethering and fusion. RAB33B acts, in coordination with RAB6A, to regulate intra-Golgi retrograde trafficking. Participates in autophagosome formation by recruiting the ATG12-ATG5-ATG16L1 complex to phagophores, probably in a nucleotide-independent manner. The polypeptide is Ras-related protein Rab-33B (Homo sapiens (Human)).